A 115-amino-acid polypeptide reads, in one-letter code: MDPQTQNTSLQRLQNVENRVVKVLELAGGVMEELASPSGPKKEFVNSHCREFMQSMKDIQVTLREEIKSACEYRPFEKCDYNARIANEICFQKLEYVLTQLEDLKQTADRYPSSD.

It belongs to the Mediator complex subunit 11 family. As to quaternary structure, component of the Mediator complex.

It is found in the nucleus. Its function is as follows. Component of the Mediator complex, a coactivator involved in the regulated transcription of nearly all RNA polymerase II-dependent genes. Mediator functions as a bridge to convey information from gene-specific regulatory proteins to the basal RNA polymerase II transcription machinery. The Mediator complex, having a compact conformation in its free form, is recruited to promoters by direct interactions with regulatory proteins and serves for the assembly of a functional pre-initiation complex with RNA polymerase II and the general transcription factors. This is Mediator of RNA polymerase II transcription subunit 11 (MED11) from Arabidopsis thaliana (Mouse-ear cress).